The chain runs to 146 residues: Cytochrome b5 type B (146 aa).

A propeptide spanning residues 1-11 (MATPEASGSGR) is cleaved from the precursor. In terms of domain architecture, Cytochrome b5 heme-binding spans 20 to 96 (VTYYRLEEVA…LKQYYIGDVH (77 aa)). Lys-30 bears the N6-acetyllysine mark. Positions 55 and 79 each coordinate heme. At Ser-80 the chain carries Phosphoserine. A helical membrane pass occupies residues 119–136 (WAYWIVPIVGAILIGFLY).

It belongs to the cytochrome b5 family. Component of a complex composed of cytochrome b5, NADH-cytochrome b5 reductase (CYB5R3) and MTARC2.

It localises to the mitochondrion outer membrane. Functionally, cytochrome b5 is a membrane-bound hemoprotein functioning as an electron carrier for several membrane-bound oxygenases. This Rattus norvegicus (Rat) protein is Cytochrome b5 type B (Cyb5b).